A 90-amino-acid chain; its full sequence is Probable Fe(2+)-trafficking protein (90 aa).

This sequence belongs to the Fe(2+)-trafficking protein family.

Could be a mediator in iron transactions between iron acquisition and iron-requiring processes, such as synthesis and/or repair of Fe-S clusters in biosynthetic enzymes. This is Probable Fe(2+)-trafficking protein from Ectopseudomonas mendocina (strain ymp) (Pseudomonas mendocina).